The chain runs to 103 residues: Large ribosomal subunit protein eL14 (103 aa).

Belongs to the eukaryotic ribosomal protein eL14 family.

The polypeptide is Large ribosomal subunit protein eL14 (Pyrobaculum islandicum (strain DSM 4184 / JCM 9189 / GEO3)).